Reading from the N-terminus, the 601-residue chain is Elongation factor 4 (601 aa).

Residues 5–187 form the tr-type G domain; that stretch reads EHIRNFSIIA…AIVERLPAPE (183 aa). GTP-binding positions include 17-22 and 134-137; these read DHGKST and NKVD.

This sequence belongs to the TRAFAC class translation factor GTPase superfamily. Classic translation factor GTPase family. LepA subfamily.

Its subcellular location is the cell inner membrane. The enzyme catalyses GTP + H2O = GDP + phosphate + H(+). Required for accurate and efficient protein synthesis under certain stress conditions. May act as a fidelity factor of the translation reaction, by catalyzing a one-codon backward translocation of tRNAs on improperly translocated ribosomes. Back-translocation proceeds from a post-translocation (POST) complex to a pre-translocation (PRE) complex, thus giving elongation factor G a second chance to translocate the tRNAs correctly. Binds to ribosomes in a GTP-dependent manner. The sequence is that of Elongation factor 4 from Nitratidesulfovibrio vulgaris (strain DSM 19637 / Miyazaki F) (Desulfovibrio vulgaris).